We begin with the raw amino-acid sequence, 226 residues long: MNRIGILSRSDGSSEWKQGSARVICGVNGPIDVKIRDERLNKATVEVLVQPVSGVAETLEKMISSRIVGILEDAIFLNTYPRTLIQVSIQIIEEDGTDTLAAVINGAVLALLDAGISLKYIPCAINCHWKNKITQDEPDVDGTINKLESIITICYSISSEPAKLIFLETAGPIPEEDFFRVLETAPLHAEEVSKKMKELLFETYNESDGHENEKNPKEDVEMDVVA.

The tract at residues 205–226 (NESDGHENEKNPKEDVEMDVVA) is disordered. Positions 207–219 (SDGHENEKNPKED) are enriched in basic and acidic residues.

It belongs to the RNase PH family. In terms of assembly, component of the RNA exosome complex. Specifically part of the catalytically inactive RNA exosome core complex (Exo-9) which may associate with the catalytic subunits rrp6 and dis3 in cytoplasmic- and nuclear-specific RNA exosome complex forms. Exo-9 is formed by a hexameric base ring of RNase PH domain-containing subunits and a cap ring consisting of csl4, rrp4 and rrp40.

The protein localises to the cytoplasm. Its subcellular location is the nucleus. It localises to the nucleolus. Functionally, non-catalytic component of the RNA exosome complex which has 3'-&gt;5' exoribonuclease activity and participates in a multitude of cellular RNA processing and degradation events. In the nucleus, the RNA exosome complex is involved in proper maturation of stable RNA species such as rRNA, snRNA and snoRNA, in the elimination of RNA processing by-products and non-coding 'pervasive' transcripts, such as antisense RNA species and cryptic unstable transcripts (CUTs), and of mRNAs with processing defects, thereby limiting or excluding their export to the cytoplasm. In the cytoplasm, the RNA exosome complex is involved in general mRNA turnover and in RNA surveillance pathways, preventing translation of aberrant mRNAs. The catalytic inactive RNA exosome core complex of 9 subunits (Exo-9) is proposed to play a pivotal role in the binding and presentation of RNA for ribonucleolysis, and to serve as a scaffold for the association with catalytic subunits and accessory proteins or complexes. ski6 is part of the hexameric ring of RNase PH domain-containing subunits proposed to form a central channel which threads RNA substrates for degradation. This is Exosome complex component rrp46 (rrp46) from Schizosaccharomyces pombe (strain 972 / ATCC 24843) (Fission yeast).